A 38-amino-acid polypeptide reads, in one-letter code: MKVRASVKRICRNCKVIKRNGVVRVICSSDPKHKQRQG.

It belongs to the bacterial ribosomal protein bL36 family.

This is Large ribosomal subunit protein bL36 from Pseudoalteromonas atlantica (strain T6c / ATCC BAA-1087).